A 363-amino-acid chain; its full sequence is Aminomethyltransferase (363 aa).

The protein belongs to the GcvT family. In terms of assembly, the glycine cleavage system is composed of four proteins: P, T, L and H.

It carries out the reaction N(6)-[(R)-S(8)-aminomethyldihydrolipoyl]-L-lysyl-[protein] + (6S)-5,6,7,8-tetrahydrofolate = N(6)-[(R)-dihydrolipoyl]-L-lysyl-[protein] + (6R)-5,10-methylene-5,6,7,8-tetrahydrofolate + NH4(+). In terms of biological role, the glycine cleavage system catalyzes the degradation of glycine. This Staphylococcus epidermidis (strain ATCC 35984 / DSM 28319 / BCRC 17069 / CCUG 31568 / BM 3577 / RP62A) protein is Aminomethyltransferase.